Reading from the N-terminus, the 332-residue chain is MEILHDEDVDDSILRDKTIAVMGYGAQGDAQANCLKDSGINVVIGETEILGGNKNPSWEKAKEDGFEVLPIDKAAEKGDVVHILLPDEVQPAIYENQIKPQLKAGKALCFSHGFNICFKRIVPPEDVDVIMVAPKAPGTEERKAYLEGFGVPGLVAVKQNPSGEAREVALAMTKAMHWTKAGILECTFEQETYEDLFGEQCVLCGGLVELMRNGFEVLVEAGYPPEMAYFECVHEMKLIVDLVWQGGIKRMAEVISNTAEYGMWAVGHQIIGPEVKEKMKEALKRVENGEFANEWVDEYKRGIPFLKASREKMGEHQVETVGAEIRKLFAQK.

The 186-residue stretch at 1–186 (MEILHDEDVD…HWTKAGILEC (186 aa)) folds into the KARI N-terminal Rossmann domain. Residues 24–27 (YGAQ), E46, N55, S57, and 87–90 (DEVQ) contribute to the NAD(+) site. H112 is an active-site residue. G138 serves as a coordination point for NAD(+). A KARI C-terminal knotted domain is found at 187-332 (TFEQETYEDL…AEIRKLFAQK (146 aa)). Positions 195, 199, 231, and 235 each coordinate Mg(2+). S256 is a substrate binding site.

It belongs to the ketol-acid reductoisomerase family. As to quaternary structure, homodimer. Mg(2+) serves as cofactor.

It carries out the reaction (2R)-2,3-dihydroxy-3-methylbutanoate + NAD(+) = (2S)-2-acetolactate + NADH + H(+). The protein operates within amino-acid biosynthesis; L-isoleucine biosynthesis; L-isoleucine from 2-oxobutanoate: step 2/4. It functions in the pathway amino-acid biosynthesis; L-valine biosynthesis; L-valine from pyruvate: step 2/4. Involved in the biosynthesis of branched-chain amino acids (BCAA). Catalyzes an alkyl-migration followed by a ketol-acid reduction of (S)-2-acetolactate (S2AL) to yield (R)-2,3-dihydroxy-isovalerate. In the isomerase reaction, S2AL is rearranged via a Mg-dependent methyl migration to produce 3-hydroxy-3-methyl-2-ketobutyrate (HMKB). In the reductase reaction, this 2-ketoacid undergoes a metal-dependent reduction by NADH to yield (R)-2,3-dihydroxy-isovalerate. The sequence is that of Ketol-acid reductoisomerase (NAD(+)) from Uncultured archaeon GZfos26G2.